Consider the following 253-residue polypeptide: 5'/3'-nucleotidase SurE (253 aa).

A divalent metal cation is bound by residues Asp8, Asp9, Ser39, and Asn92.

It belongs to the SurE nucleotidase family. It depends on a divalent metal cation as a cofactor.

Its subcellular location is the cytoplasm. The enzyme catalyses a ribonucleoside 5'-phosphate + H2O = a ribonucleoside + phosphate. It catalyses the reaction a ribonucleoside 3'-phosphate + H2O = a ribonucleoside + phosphate. The catalysed reaction is [phosphate](n) + H2O = [phosphate](n-1) + phosphate + H(+). Functionally, nucleotidase with a broad substrate specificity as it can dephosphorylate various ribo- and deoxyribonucleoside 5'-monophosphates and ribonucleoside 3'-monophosphates with highest affinity to 3'-AMP. Also hydrolyzes polyphosphate (exopolyphosphatase activity) with the preference for short-chain-length substrates (P20-25). Might be involved in the regulation of dNTP and NTP pools, and in the turnover of 3'-mononucleotides produced by numerous intracellular RNases (T1, T2, and F) during the degradation of various RNAs. This Salmonella paratyphi B (strain ATCC BAA-1250 / SPB7) protein is 5'/3'-nucleotidase SurE.